Here is a 349-residue protein sequence, read N- to C-terminus: Glycerol-3-phosphate dehydrogenase [NAD(+)], cytoplasmic (349 aa).

Residue 10–15 participates in NAD(+) binding; that stretch reads GSGNWG. A substrate-binding site is contributed by Lys-120. Residue Ala-153 participates in NAD(+) binding. Lys-204 functions as the Proton acceptor in the catalytic mechanism. Arg-269 contributes to the NAD(+) binding site. 269–270 is a substrate binding site; sequence RN. Lys-289 carries the post-translational modification N6-succinyllysine. NAD(+)-binding residues include Lys-296 and Gln-298. Tyr-326 bears the Phosphotyrosine mark.

The protein belongs to the NAD-dependent glycerol-3-phosphate dehydrogenase family. In terms of assembly, homodimer.

It localises to the cytoplasm. The enzyme catalyses sn-glycerol 3-phosphate + NAD(+) = dihydroxyacetone phosphate + NADH + H(+). Functionally, has glycerol-3-phosphate dehydrogenase activity. This chain is Glycerol-3-phosphate dehydrogenase [NAD(+)], cytoplasmic (GPD1), found in Bos taurus (Bovine).